A 276-amino-acid chain; its full sequence is MDFWTAFQAIILGVVEGLTEFLPISSTGHQIIVADLIGFGGERAMAFNIIIQLAAILAVVWEFRSKIFEVVFGLTHQPKARRFTGNLLLAFMPAVVLGVLFADLIHEYLFNPVTVAAALVVGGVIMLWAERRKHRVEVDHVDDMRWSHALKIGFIQCLAMIPGTSRSGSTIIGGLLFGLSRKAATEFSFFLAMPTMVGAAVYSGYKYRDLFQPGDLPVFALGFVTSFIFAMIAVRALLKFIANHSYAAFAWYRIVFGLFILATWQFGWVDWSTAHG.

The next 6 helical transmembrane spans lie at 43 to 63 (RAMA…VWEF), 85 to 105 (GNLL…ADLI), 109 to 129 (LFNP…MLWA), 183 to 203 (AATE…AVYS), 214 to 234 (GDLP…MIAV), and 249 to 269 (FAWY…FGWV).

Belongs to the UppP family.

The protein resides in the cell inner membrane. It carries out the reaction di-trans,octa-cis-undecaprenyl diphosphate + H2O = di-trans,octa-cis-undecaprenyl phosphate + phosphate + H(+). In terms of biological role, catalyzes the dephosphorylation of undecaprenyl diphosphate (UPP). Confers resistance to bacitracin. The protein is Undecaprenyl-diphosphatase of Pseudomonas putida (strain ATCC 700007 / DSM 6899 / JCM 31910 / BCRC 17059 / LMG 24140 / F1).